We begin with the raw amino-acid sequence, 58 residues long: Small ribosomal subunit protein bS21 (58 aa).

A compositionally biased stretch (basic and acidic residues) spans Ile-32–Ser-42. The tract at residues Ile-32–Asn-58 is disordered. The segment covering Val-43 to Asn-58 has biased composition (basic residues).

Belongs to the bacterial ribosomal protein bS21 family.

The polypeptide is Small ribosomal subunit protein bS21 (Lachnospira eligens (strain ATCC 27750 / DSM 3376 / VPI C15-48 / C15-B4) (Eubacterium eligens)).